A 312-amino-acid chain; its full sequence is Pyridoxal kinase (312 aa).

N-acetylmethionine is present on Met1. Pyridoxal 5'-phosphate contacts are provided by Ser12 and Thr47. Pyridoxamine contacts are provided by Ser12 and Thr47. Ser59 is subject to Phosphoserine. Asp113 is a binding site for K(+). Tyr127 lines the pyridoxal 5'-phosphate pocket. Residue Thr148 participates in K(+) binding. Asn150 serves as a coordination point for ADP. Asn150 contributes to the ATP binding site. Ser164 is subject to Phosphoserine. Thr186 contributes to the K(+) binding site. ADP is bound at residue 186–187; the sequence is TS. ATP is bound at residue 186-187; sequence TS. The residue at position 213 (Ser213) is a Phosphoserine. ADP-binding positions include 223–226 and 233–234; these read MHKV and TG. ATP is bound by residues 223–226 and 233–234; these read MHKV and TG. 232 to 235 is a pyridoxal 5'-phosphate binding site; sequence GTGD. Residue Asp235 coordinates pyridoxamine. Residue Asp235 is the Proton acceptor of the active site. Ser285 is subject to Phosphoserine.

This sequence belongs to the pyridoxine kinase family. As to quaternary structure, homodimer. Zn(2+) serves as cofactor. The cofactor is Mg(2+). As to expression, ubiquitous.

The protein localises to the cytoplasm. It is found in the cytosol. It catalyses the reaction pyridoxal + ATP = pyridoxal 5'-phosphate + ADP + H(+). The enzyme catalyses pyridoxamine + ATP = pyridoxamine 5'-phosphate + ADP + H(+). The catalysed reaction is pyridoxine + ATP = pyridoxine 5'-phosphate + ADP + H(+). It functions in the pathway cofactor metabolism; pyridoxal 5'-phosphate salvage; pyridoxal 5'-phosphate from pyridoxal: step 1/1. Its pathway is cofactor metabolism; pyridoxal 5'-phosphate salvage; pyridoxine 5'-phosphate from pyridoxine: step 1/1. It participates in cofactor metabolism; pyridoxal 5'-phosphate salvage; pyridoxamine 5'-phosphate from pyridoxamine: step 1/1. Activated by K(+). Activity is increased in the presence of Na(+). In terms of biological role, catalyzes the phosphorylation of the dietary vitamin B6 vitamers pyridoxal (PL), pyridoxine (PN) and pyridoxamine (PM) to form pyridoxal 5'-phosphate (PLP), pyridoxine 5'-phosphate (PNP) and pyridoxamine 5'-phosphate (PMP), respectively. PLP is the active form of vitamin B6, and acts as a cofactor for over 140 different enzymatic reactions. In Ovis aries (Sheep), this protein is Pyridoxal kinase (PDXK).